The chain runs to 266 residues: Tryptophan synthase alpha chain (266 aa).

Active-site proton acceptor residues include Glu49 and Asp60.

It belongs to the TrpA family. Tetramer of two alpha and two beta chains.

It catalyses the reaction (1S,2R)-1-C-(indol-3-yl)glycerol 3-phosphate + L-serine = D-glyceraldehyde 3-phosphate + L-tryptophan + H2O. The protein operates within amino-acid biosynthesis; L-tryptophan biosynthesis; L-tryptophan from chorismate: step 5/5. Its function is as follows. The alpha subunit is responsible for the aldol cleavage of indoleglycerol phosphate to indole and glyceraldehyde 3-phosphate. The protein is Tryptophan synthase alpha chain of Shewanella amazonensis (strain ATCC BAA-1098 / SB2B).